Here is a 149-residue protein sequence, read N- to C-terminus: Transcriptional repressor NrdR (149 aa).

The segment at 3–34 (CPFCGNLETQVVETRVSEDADFIRRRRQCGAC) is a zinc-finger region. The ATP-cone domain maps to 49-139 (PAIVKKDGRR…VYRSFEDIDE (91 aa)).

The protein belongs to the NrdR family. Requires Zn(2+) as cofactor.

Negatively regulates transcription of bacterial ribonucleotide reductase nrd genes and operons by binding to NrdR-boxes. The protein is Transcriptional repressor NrdR of Polaromonas sp. (strain JS666 / ATCC BAA-500).